Reading from the N-terminus, the 445-residue chain is Tubulin beta-1 chain (445 aa).

An MREI motif motif is present at residues methionine 1–isoleucine 4. 8 residues coordinate GTP: glutamine 11, glutamate 69, serine 138, glycine 142, threonine 143, glycine 144, asparagine 204, and asparagine 226. Position 69 (glutamate 69) interacts with Mg(2+). Residues glutamine 424–alanine 445 form a disordered region. Residues threonine 429–alanine 445 show a composition bias toward acidic residues. At glutamate 438 the chain carries 5-glutamyl polyglutamate.

Belongs to the tubulin family. As to quaternary structure, dimer of alpha and beta chains. A typical microtubule is a hollow water-filled tube with an outer diameter of 25 nm and an inner diameter of 15 nM. Alpha-beta heterodimers associate head-to-tail to form protofilaments running lengthwise along the microtubule wall with the beta-tubulin subunit facing the microtubule plus end conferring a structural polarity. Microtubules usually have 13 protofilaments but different protofilament numbers can be found in some organisms and specialized cells. Requires Mg(2+) as cofactor. Some glutamate residues at the C-terminus are polyglycylated, resulting in polyglycine chains on the gamma-carboxyl group. Glycylation is mainly limited to tubulin incorporated into axonemes (cilia and flagella) whereas glutamylation is prevalent in neuronal cells, centrioles, axonemes, and the mitotic spindle. Both modifications can coexist on the same protein on adjacent residues, and lowering polyglycylation levels increases polyglutamylation, and reciprocally. The precise function of polyglycylation is still unclear. In terms of processing, some glutamate residues at the C-terminus are polyglutamylated, resulting in polyglutamate chains on the gamma-carboxyl group. Polyglutamylation plays a key role in microtubule severing by spastin (SPAST). SPAST preferentially recognizes and acts on microtubules decorated with short polyglutamate tails: severing activity by SPAST increases as the number of glutamates per tubulin rises from one to eight, but decreases beyond this glutamylation threshold. As to expression, highly expressed in skeletal muscle.

The protein localises to the cytoplasm. It localises to the cytoskeleton. In terms of biological role, tubulin is the major constituent of microtubules, a cylinder consisting of laterally associated linear protofilaments composed of alpha- and beta-tubulin heterodimers. Microtubules grow by the addition of GTP-tubulin dimers to the microtubule end, where a stabilizing cap forms. Below the cap, tubulin dimers are in GDP-bound state, owing to GTPase activity of alpha-tubulin. This is Tubulin beta-1 chain from Gallus gallus (Chicken).